Consider the following 533-residue polypeptide: Flavin-containing monooxygenase 5 (533 aa).

Arg-5 carries the dimethylated arginine modification. Residues 10–14 (GGGVS), Glu-33, and 41–42 (LW) each bind FAD. Ser-54 carries the phosphoserine modification. Residue Tyr-56 is modified to Phosphotyrosine. Residue Ser-58 is modified to Phosphoserine. 62-63 (NT) provides a ligand contact to FAD. 196-199 (SGGD) is an NADP(+) binding site. Ser-280 carries the post-translational modification Phosphoserine. At Thr-284 the chain carries Phosphothreonine. Ser-401 carries the phosphoserine modification. The chain crosses the membrane as a helical span at residues 510–530 (MVSAVTTGCFMLAVVFFAIIM).

It belongs to the FMO family. FAD is required as a cofactor. Expressed in liver.

The protein localises to the microsome membrane. Its subcellular location is the endoplasmic reticulum membrane. It carries out the reaction N,N-dimethylaniline + NADPH + O2 + H(+) = N,N-dimethylaniline N-oxide + NADP(+) + H2O. It catalyses the reaction NADPH + O2 + H(+) = H2O2 + NADP(+). The catalysed reaction is heptan-2-one + NADPH + O2 + H(+) = pentyl acetate + NADP(+) + H2O. The enzyme catalyses octan-3-one + NADPH + O2 + H(+) = pentyl propanoate + NADP(+) + H2O. It carries out the reaction octan-3-one + NADPH + O2 + H(+) = ethyl hexanoate + NADP(+) + H2O. It catalyses the reaction hexan-3-one + NADPH + O2 + H(+) = ethyl butanoate + NADP(+) + H2O. The catalysed reaction is hexan-3-one + NADPH + O2 + H(+) = propyl propanoate + NADP(+) + H2O. The enzyme catalyses heptan-4-one + NADPH + O2 + H(+) = propyl butanoate + NADP(+) + H2O. It carries out the reaction (2E)-geranial + NADPH + O2 + H(+) = (1E)-2,6-dimethylhepta-1,5-dien-1-yl formate + NADP(+) + H2O. It catalyses the reaction sulcatone + NADPH + O2 + H(+) = 4-methylpent-3-en-1-yl acetate + NADP(+) + H2O. Functionally, acts as a Baeyer-Villiger monooxygenase on a broad range of substrates. Catalyzes the insertion of an oxygen atom into a carbon-carbon bond adjacent to a carbonyl, which converts ketones to esters. Active on diverse carbonyl compounds, whereas soft nucleophiles are mostly non- or poorly reactive. In contrast with other forms of FMO it is non- or poorly active on 'classical' substrates such as drugs, pesticides, and dietary components containing soft nucleophilic heteroatoms. Able to oxidize drug molecules bearing a carbonyl group on an aliphatic chain, such as nabumetone and pentoxifylline. Also, in the absence of substrates, shows slow but yet significant NADPH oxidase activity. Acts as a positive modulator of cholesterol biosynthesis as well as glucose homeostasis, promoting metabolic aging via pleiotropic effects. The polypeptide is Flavin-containing monooxygenase 5 (FMO5) (Cavia porcellus (Guinea pig)).